Consider the following 229-residue polypeptide: Large ribosomal subunit protein uL1 (229 aa).

The protein belongs to the universal ribosomal protein uL1 family. In terms of assembly, part of the 50S ribosomal subunit.

Binds directly to 23S rRNA. The L1 stalk is quite mobile in the ribosome, and is involved in E site tRNA release. Functionally, protein L1 is also a translational repressor protein, it controls the translation of the L11 operon by binding to its mRNA. The polypeptide is Large ribosomal subunit protein uL1 (Haemophilus influenzae (strain PittEE)).